Consider the following 222-residue polypeptide: Protein GrpE (222 aa).

Residues 1–21 form a disordered region; the sequence is MSDEKNKFTDASFENCDLKNP.

This sequence belongs to the GrpE family. Homodimer.

It is found in the cytoplasm. Functionally, participates actively in the response to hyperosmotic and heat shock by preventing the aggregation of stress-denatured proteins, in association with DnaK and GrpE. It is the nucleotide exchange factor for DnaK and may function as a thermosensor. Unfolded proteins bind initially to DnaJ; upon interaction with the DnaJ-bound protein, DnaK hydrolyzes its bound ATP, resulting in the formation of a stable complex. GrpE releases ADP from DnaK; ATP binding to DnaK triggers the release of the substrate protein, thus completing the reaction cycle. Several rounds of ATP-dependent interactions between DnaJ, DnaK and GrpE are required for fully efficient folding. The chain is Protein GrpE from Bartonella tribocorum (strain CIP 105476 / IBS 506).